Reading from the N-terminus, the 199-residue chain is Protein-methionine-sulfoxide reductase heme-binding subunit MsrQ (199 aa).

The next 4 membrane-spanning stretches (helical) occupy residues 10-30, 82-102, 116-136, and 153-173; these read WLKV…FWAI, LWCF…ELGI, PYLT…LTST, and VVYL…KILS.

This sequence belongs to the MsrQ family. Heterodimer of a catalytic subunit (MsrP) and a heme-binding subunit (MsrQ). FMN serves as cofactor. Heme b is required as a cofactor.

The protein resides in the cell inner membrane. In terms of biological role, part of the MsrPQ system that repairs oxidized periplasmic proteins containing methionine sulfoxide residues (Met-O), using respiratory chain electrons. Thus protects these proteins from oxidative-stress damage caused by reactive species of oxygen and chlorine generated by the host defense mechanisms. MsrPQ is essential for the maintenance of envelope integrity under bleach stress, rescuing a wide series of structurally unrelated periplasmic proteins from methionine oxidation, including the primary periplasmic chaperone SurA and the lipoprotein Pal. MsrQ provides electrons for reduction to the reductase catalytic subunit MsrP, using the quinone pool of the respiratory chain. The protein is Protein-methionine-sulfoxide reductase heme-binding subunit MsrQ of Salmonella dublin (strain CT_02021853).